The primary structure comprises 258 residues: Imidazole glycerol phosphate synthase subunit HisF (258 aa).

Residues D11 and D130 contribute to the active site.

Belongs to the HisA/HisF family. Heterodimer of HisH and HisF.

The protein resides in the cytoplasm. The enzyme catalyses 5-[(5-phospho-1-deoxy-D-ribulos-1-ylimino)methylamino]-1-(5-phospho-beta-D-ribosyl)imidazole-4-carboxamide + L-glutamine = D-erythro-1-(imidazol-4-yl)glycerol 3-phosphate + 5-amino-1-(5-phospho-beta-D-ribosyl)imidazole-4-carboxamide + L-glutamate + H(+). Its pathway is amino-acid biosynthesis; L-histidine biosynthesis; L-histidine from 5-phospho-alpha-D-ribose 1-diphosphate: step 5/9. Its function is as follows. IGPS catalyzes the conversion of PRFAR and glutamine to IGP, AICAR and glutamate. The HisF subunit catalyzes the cyclization activity that produces IGP and AICAR from PRFAR using the ammonia provided by the HisH subunit. This is Imidazole glycerol phosphate synthase subunit HisF from Citrobacter koseri (strain ATCC BAA-895 / CDC 4225-83 / SGSC4696).